Here is a 152-residue protein sequence, read N- to C-terminus: Sulfur-rich protein (152 aa).

The interval 1–20 is disordered; the sequence is MSTVPVVQGAGSSNSAQDIS. A run of 2 helical transmembrane segments spans residues 43–63 and 69–89; these read VGLV…LVSA and AIYL…VGIL.

The protein localises to the membrane. The sequence is that of Sulfur-rich protein (srp) from Chlamydia trachomatis serovar A (strain ATCC VR-571B / DSM 19440 / HAR-13).